The following is a 467-amino-acid chain: Argininosuccinate lyase (467 aa).

The protein belongs to the lyase 1 family. Argininosuccinate lyase subfamily.

It localises to the cytoplasm. The catalysed reaction is 2-(N(omega)-L-arginino)succinate = fumarate + L-arginine. It participates in amino-acid biosynthesis; L-arginine biosynthesis; L-arginine from L-ornithine and carbamoyl phosphate: step 3/3. The sequence is that of Argininosuccinate lyase from Allorhizobium ampelinum (strain ATCC BAA-846 / DSM 112012 / S4) (Agrobacterium vitis (strain S4)).